Reading from the N-terminus, the 446-residue chain is tRNA modification GTPase MnmE (446 aa).

The (6S)-5-formyl-5,6,7,8-tetrahydrofolate site is built by Arg24, Glu81, and Lys120. The TrmE-type G domain occupies 216 to 368; the sequence is GLHAVLIGPP…LHTRLRELAL (153 aa). Asn226 is a binding site for K(+). GTP is bound by residues 226–231, 245–251, and 270–273; these read NAGKSS, TDVAGTT, and DTAG. Ser230 is a Mg(2+) binding site. Residues Thr245, Val247, and Thr250 each contribute to the K(+) site. Residue Thr251 coordinates Mg(2+). Residue Lys446 participates in (6S)-5-formyl-5,6,7,8-tetrahydrofolate binding.

It belongs to the TRAFAC class TrmE-Era-EngA-EngB-Septin-like GTPase superfamily. TrmE GTPase family. As to quaternary structure, homodimer. Heterotetramer of two MnmE and two MnmG subunits. The cofactor is K(+).

It is found in the cytoplasm. In terms of biological role, exhibits a very high intrinsic GTPase hydrolysis rate. Involved in the addition of a carboxymethylaminomethyl (cmnm) group at the wobble position (U34) of certain tRNAs, forming tRNA-cmnm(5)s(2)U34. The polypeptide is tRNA modification GTPase MnmE (Xanthomonas campestris pv. campestris (strain B100)).